Reading from the N-terminus, the 140-residue chain is Protein SamA (140 aa).

Active-site for autocatalytic cleavage activity residues include serine 61 and lysine 98.

It belongs to the peptidase S24 family.

Functionally, involved in UV protection and mutation. The sequence is that of Protein SamA (samA) from Salmonella typhimurium (strain LT2 / SGSC1412 / ATCC 700720).